Consider the following 377-residue polypeptide: Succinyl-diaminopimelate desuccinylase (377 aa).

His68 contacts Zn(2+). Asp70 is a catalytic residue. A Zn(2+)-binding site is contributed by Asp101. Glu135 functions as the Proton acceptor in the catalytic mechanism. Zn(2+)-binding residues include Glu136, Glu164, and His350.

The protein belongs to the peptidase M20A family. DapE subfamily. In terms of assembly, homodimer. Zn(2+) is required as a cofactor. Co(2+) serves as cofactor.

The catalysed reaction is N-succinyl-(2S,6S)-2,6-diaminopimelate + H2O = (2S,6S)-2,6-diaminopimelate + succinate. The protein operates within amino-acid biosynthesis; L-lysine biosynthesis via DAP pathway; LL-2,6-diaminopimelate from (S)-tetrahydrodipicolinate (succinylase route): step 3/3. Its function is as follows. Catalyzes the hydrolysis of N-succinyl-L,L-diaminopimelic acid (SDAP), forming succinate and LL-2,6-diaminopimelate (DAP), an intermediate involved in the bacterial biosynthesis of lysine and meso-diaminopimelic acid, an essential component of bacterial cell walls. The protein is Succinyl-diaminopimelate desuccinylase of Aliivibrio fischeri (strain MJ11) (Vibrio fischeri).